A 502-amino-acid chain; its full sequence is Glycerol kinase (502 aa).

Residue Thr14 coordinates ADP. Thr14, Thr15, and Ser16 together coordinate ATP. Thr14 provides a ligand contact to sn-glycerol 3-phosphate. Residue Arg18 participates in ADP binding. Residues Arg84, Glu85, and Tyr136 each coordinate sn-glycerol 3-phosphate. Residues Arg84, Glu85, and Tyr136 each coordinate glycerol. Position 232 is a phosphohistidine; by HPr (His232). Asp246 contributes to the sn-glycerol 3-phosphate binding site. Asp246 and Gln247 together coordinate glycerol. The ADP site is built by Thr268 and Gly311. Positions 268, 311, 315, and 412 each coordinate ATP. ADP is bound by residues Gly412 and Asn416.

Belongs to the FGGY kinase family. In terms of assembly, homotetramer and homodimer (in equilibrium). In terms of processing, the phosphoenolpyruvate-dependent sugar phosphotransferase system (PTS), including enzyme I, and histidine-containing protein (HPr) are required for the phosphorylation, which leads to the activation of the enzyme.

It catalyses the reaction glycerol + ATP = sn-glycerol 3-phosphate + ADP + H(+). It participates in polyol metabolism; glycerol degradation via glycerol kinase pathway; sn-glycerol 3-phosphate from glycerol: step 1/1. Its activity is regulated as follows. Activated by phosphorylation and inhibited by fructose 1,6-bisphosphate (FBP). Its function is as follows. Key enzyme in the regulation of glycerol uptake and metabolism. Catalyzes the phosphorylation of glycerol to yield sn-glycerol 3-phosphate. The sequence is that of Glycerol kinase from Streptococcus pneumoniae (strain P1031).